The sequence spans 343 residues: Inositol 2-dehydrogenase 1 (343 aa).

The protein belongs to the Gfo/Idh/MocA family. As to quaternary structure, homotetramer.

It catalyses the reaction myo-inositol + NAD(+) = scyllo-inosose + NADH + H(+). Its function is as follows. Involved in the oxidation of myo-inositol (MI) to 2-keto-myo-inositol (2KMI or 2-inosose). This Mycolicibacterium vanbaalenii (strain DSM 7251 / JCM 13017 / BCRC 16820 / KCTC 9966 / NRRL B-24157 / PYR-1) (Mycobacterium vanbaalenii) protein is Inositol 2-dehydrogenase 1.